We begin with the raw amino-acid sequence, 174 residues long: Crossover junction endodeoxyribonuclease RuvC (174 aa).

Residues aspartate 8, glutamate 68, and aspartate 140 contribute to the active site. Residues aspartate 8, glutamate 68, and aspartate 140 each contribute to the Mg(2+) site.

The protein belongs to the RuvC family. Homodimer which binds Holliday junction (HJ) DNA. The HJ becomes 2-fold symmetrical on binding to RuvC with unstacked arms; it has a different conformation from HJ DNA in complex with RuvA. In the full resolvosome a probable DNA-RuvA(4)-RuvB(12)-RuvC(2) complex forms which resolves the HJ. Mg(2+) serves as cofactor.

The protein resides in the cytoplasm. The catalysed reaction is Endonucleolytic cleavage at a junction such as a reciprocal single-stranded crossover between two homologous DNA duplexes (Holliday junction).. Functionally, the RuvA-RuvB-RuvC complex processes Holliday junction (HJ) DNA during genetic recombination and DNA repair. Endonuclease that resolves HJ intermediates. Cleaves cruciform DNA by making single-stranded nicks across the HJ at symmetrical positions within the homologous arms, yielding a 5'-phosphate and a 3'-hydroxyl group; requires a central core of homology in the junction. The consensus cleavage sequence is 5'-(A/T)TT(C/G)-3'. Cleavage occurs on the 3'-side of the TT dinucleotide at the point of strand exchange. HJ branch migration catalyzed by RuvA-RuvB allows RuvC to scan DNA until it finds its consensus sequence, where it cleaves and resolves the cruciform DNA. The sequence is that of Crossover junction endodeoxyribonuclease RuvC from Legionella pneumophila subsp. pneumophila (strain Philadelphia 1 / ATCC 33152 / DSM 7513).